Reading from the N-terminus, the 829-residue chain is Venom phosphodiesterase CdcPDE (829 aa).

SMB domains follow at residues 8 to 51 (PQVS…VLPT) and 52 to 96 (QSWS…GETS). Disulfide bonds link Cys-12–Cys-16, Cys-12–Cys-29, Cys-16–Cys-47, Cys-27–Cys-29, Cys-27–Cys-40, Cys-33–Cys-39, Cys-40–Cys-47, Cys-56–Cys-61, Cys-56–Cys-73, Cys-61–Cys-91, Cys-71–Cys-73, Cys-71–Cys-84, Cys-77–Cys-83, Cys-84–Cys-91, Cys-102–Cys-148, and Cys-110–Cys-322. A glycan (N-linked (GlcNAc...) asparagine) is linked at Asn-17. The Cell attachment site motif lies at 36–38 (RQA). A divalent metal cation-binding residues include Asp-125 and Thr-163. The active-site AMP-threonine intermediate is the Thr-163. Residues Asn-194 and Asn-237 are each glycosylated (N-linked (GlcNAc...) asparagine). Lys-249 lines the AMP pocket. Positions 283, 287, 330, and 331 each coordinate a divalent metal cation. His-287 is an AMP binding site. 6 disulfide bridges follow: Cys-338–Cys-435, Cys-386–Cys-771, Cys-519–Cys-577, Cys-532–Cys-632, Cys-534–Cys-617, and Cys-740–Cys-750. Residue Asn-383 is glycosylated (N-linked (GlcNAc...) asparagine). A divalent metal cation is bound at residue His-440. 2 N-linked (GlcNAc...) asparagine glycosylation sites follow: Asn-572 and Asn-652.

The protein belongs to the nucleotide pyrophosphatase/phosphodiesterase family. In terms of assembly, monomer. It depends on a divalent metal cation as a cofactor. Post-translationally, N-glycosylated. Glycosylation counts for an increased mass of ~9%. In terms of processing, contains 16 disulfide bonds. As to expression, expressed by venom gland.

Its subcellular location is the secreted. It catalyses the reaction ADP + H2O = AMP + phosphate + H(+). Its function is as follows. Hydrolyzes ADP with high activity. Shows weak or no activity on 5'-AMP, 5'-GMP, 3'-AMP, ATP, cAMP, and cGMP. Is devoid of monophosphatase and proteinase activities. Inhibits ADP-induced platelet aggregation and is cytotoxic to human keratinocytes. Kinetic parameters indicated a higher affinity for the substrate bis(p-nitrophenyl) phosphate compared to others snake venom PDEs. Is recognized by the crotalid antivenom produced by the Instituto Butantan. This chain is Venom phosphodiesterase CdcPDE, found in Crotalus durissus collilineatus (Brazilian rattlesnake).